The sequence spans 238 residues: Outer membrane protein A (238 aa).

A run of 5 beta stranded transmembrane segments spans residues 1 to 8 (LTAKLGYP), 13 to 21 (LDIYTRLGG), 43 to 52 (PVFAGGVEYA), 57 to 64 (IATRLEYQ), and 83 to 91 (LLSVGVSYR). A run of 3 repeats spans residues 104–105 (AP), 106–107 (AP), and 108–109 (AP). Residues 104-109 (APAPAP) form a 3 X 2 AA tandem repeats of A-P region. The region spanning 111–238 (VQTKHFTLKS…RRVEIEVKGI (128 aa)) is the OmpA-like domain. The cysteines at positions 212 and 224 are disulfide-linked.

It belongs to the outer membrane OOP (TC 1.B.6) superfamily. OmpA family. As to quaternary structure, monomer and homodimer.

It localises to the cell outer membrane. Its function is as follows. With TolR probably plays a role in maintaining the position of the peptidoglycan cell wall in the periplasm. Acts as a porin with low permeability that allows slow penetration of small solutes; an internal gate slows down solute passage. This Citrobacter freundii protein is Outer membrane protein A.